The primary structure comprises 328 residues: Interferon regulatory factor 1 (328 aa).

Residues 5–113 (RMRMRPWLEM…SAVRVYRMLP (109 aa)) constitute a DNA-binding region (IRF tryptophan pentad repeat). K78 bears the N6-acetyllysine mark. Residues 92-164 (EEVKDQSRNK…STLPDDHSSY (73 aa)) form a disordered region. Low complexity predominate over residues 141-157 (GDSSPDTLSDGLSSSTL). Glycyl lysine isopeptide (Lys-Gly) (interchain with G-Cter in SUMO) cross-links involve residues K276 and K300.

Belongs to the IRF family. Monomer. Homodimer. Interacts with EP300. Interacts with MYD88. Interacts with PIAS3. Interacts with SPOP. Post-translationally, phosphorylated by CK2 and this positively regulates its activity. In terms of processing, sumoylation represses the transcriptional activity and displays enhanced resistance to protein degradation. Sumoylated by UBE2I/UBC9 and SUMO1. Inactivates the tumor suppressor activity. Elevated levels in tumor cells. Major site is Lys-276. Sumoylation is enhanced by PIAS3. Desumoylated by SENP1 in tumor cells and appears to compete with ubiquitination on C-terminal sites. Ubiquitinated in a SPOP-depedent manner. Appears to compete with sumoylation on C-terminal sites.

Its subcellular location is the nucleus. The protein resides in the cytoplasm. Its activity is regulated as follows. Activated by MYD88. Functionally, transcriptional regulator which displays a remarkable functional diversity in the regulation of cellular responses. Regulates transcription of IFN and IFN-inducible genes, host response to viral and bacterial infections, regulation of many genes expressed during hematopoiesis, inflammation, immune responses and cell proliferation and differentiation, regulation of the cell cycle and induction of growth arrest and programmed cell death following DNA damage. Stimulates both innate and acquired immune responses through the activation of specific target genes and can act as a transcriptional activator and repressor regulating target genes by binding to an interferon-stimulated response element (ISRE) in their promoters. Has an essentail role in IFNG-dependent immunity to mycobacteria. Binds to a consensus sequence in gene promoters. Its target genes for transcriptional activation activity include: genes involved in anti-viral response, such as IFN-alpha/beta, RIGI, TNFSF10/TRAIL, ZBP1, OAS1/2, PIAS1/GBP, EIF2AK2/PKR and RSAD2/viperin; antibacterial response, such as GBP2, GBP5 and NOS2/INOS; anti-proliferative response, such as p53/TP53, LOX and CDKN1A; apoptosis, such as BBC3/PUMA, CASP1, CASP7 and CASP8; immune response, such as IL7, IL12A/B and IL15, PTGS2/COX2 and CYBB; DNA damage responses and DNA repair, such as POLQ/POLH; MHC class I expression, such as TAP1, PSMB9/LMP2, PSME1/PA28A, PSME2/PA28B and B2M and MHC class II expression, such as CIITA; metabolic enzymes, such as ACOD1/IRG1. Represses genes involved in anti-proliferative response, such as BIRC5/survivin, CCNB1, CCNE1, CDK1, CDK2 and CDK4 and in immune response, such as FOXP3, IL4, ANXA2 and TLR4. Stimulates p53/TP53-dependent transcription through enhanced recruitment of EP300 leading to increased acetylation of p53/TP53. Plays an important role in immune response directly affecting NK maturation and activity, macrophage production of IL12, Th1 development and maturation of CD8+ T-cells. Also implicated in the differentiation and maturation of dendritic cells and in the suppression of regulatory T (Treg) cells development. Acts as a tumor suppressor and plays a role not only in antagonism of tumor cell growth but also in stimulating an immune response against tumor cells. This chain is Interferon regulatory factor 1 (Irf1), found in Rattus norvegicus (Rat).